A 288-amino-acid chain; its full sequence is Acetyl-coenzyme A carboxylase carboxyl transferase subunit beta (288 aa).

The CoA carboxyltransferase N-terminal domain occupies 34–288; the sequence is LFAKCPACKH…HLVSFHGGGQ (255 aa). Residues C38, C41, C56, and C59 each coordinate Zn(2+). A C4-type zinc finger spans residues 38–59; it reads CPACKHMIYKKDLGLAKICPTC.

It belongs to the AccD/PCCB family. Acetyl-CoA carboxylase is a heterohexamer composed of biotin carboxyl carrier protein (AccB), biotin carboxylase (AccC) and two subunits each of ACCase subunit alpha (AccA) and ACCase subunit beta (AccD). The cofactor is Zn(2+).

It localises to the cytoplasm. It carries out the reaction N(6)-carboxybiotinyl-L-lysyl-[protein] + acetyl-CoA = N(6)-biotinyl-L-lysyl-[protein] + malonyl-CoA. It functions in the pathway lipid metabolism; malonyl-CoA biosynthesis; malonyl-CoA from acetyl-CoA: step 1/1. Functionally, component of the acetyl coenzyme A carboxylase (ACC) complex. Biotin carboxylase (BC) catalyzes the carboxylation of biotin on its carrier protein (BCCP) and then the CO(2) group is transferred by the transcarboxylase to acetyl-CoA to form malonyl-CoA. This is Acetyl-coenzyme A carboxylase carboxyl transferase subunit beta from Streptococcus pyogenes serotype M49 (strain NZ131).